We begin with the raw amino-acid sequence, 500 residues long: Probable cytosol aminopeptidase (500 aa).

Mn(2+) contacts are provided by K268 and D273. The active site involves K280. Mn(2+) contacts are provided by D291, D350, and E352. Residue R354 is part of the active site.

The protein belongs to the peptidase M17 family. It depends on Mn(2+) as a cofactor.

The protein localises to the cytoplasm. It carries out the reaction Release of an N-terminal amino acid, Xaa-|-Yaa-, in which Xaa is preferably Leu, but may be other amino acids including Pro although not Arg or Lys, and Yaa may be Pro. Amino acid amides and methyl esters are also readily hydrolyzed, but rates on arylamides are exceedingly low.. The catalysed reaction is Release of an N-terminal amino acid, preferentially leucine, but not glutamic or aspartic acids.. Presumably involved in the processing and regular turnover of intracellular proteins. Catalyzes the removal of unsubstituted N-terminal amino acids from various peptides. The sequence is that of Probable cytosol aminopeptidase from Baumannia cicadellinicola subsp. Homalodisca coagulata.